The sequence spans 295 residues: Protoheme IX farnesyltransferase (295 aa).

A run of 9 helical transmembrane segments spans residues Val-7 to Ala-27, Val-34 to Phe-54, Leu-78 to Leu-98, Leu-106 to Met-126, Val-131 to Ala-151, Leu-161 to Phe-181, Ile-207 to Ala-227, Gly-228 to Ser-248, and Leu-263 to Gln-283.

It belongs to the UbiA prenyltransferase family. Protoheme IX farnesyltransferase subfamily.

It is found in the cell inner membrane. It carries out the reaction heme b + (2E,6E)-farnesyl diphosphate + H2O = Fe(II)-heme o + diphosphate. It functions in the pathway porphyrin-containing compound metabolism; heme O biosynthesis; heme O from protoheme: step 1/1. Functionally, converts heme B (protoheme IX) to heme O by substitution of the vinyl group on carbon 2 of heme B porphyrin ring with a hydroxyethyl farnesyl side group. In Aeromonas salmonicida (strain A449), this protein is Protoheme IX farnesyltransferase.